Reading from the N-terminus, the 901-residue chain is Protein translocase subunit SecA (901 aa).

Residues glutamine 87, 105 to 109 (GEGKT), and aspartate 512 each bind ATP. Positions 839–901 (QMEEQRRQES…KYKQCHGRLA (63 aa)) are disordered. The segment covering 841–850 (EEQRRQESER) has biased composition (basic and acidic residues). Zn(2+) contacts are provided by cysteine 885, cysteine 887, cysteine 896, and histidine 897. Residues 891-901 (KKYKQCHGRLA) are compositionally biased toward basic residues.

Belongs to the SecA family. In terms of assembly, monomer and homodimer. Part of the essential Sec protein translocation apparatus which comprises SecA, SecYEG and auxiliary proteins SecDF-YajC and YidC. The cofactor is Zn(2+).

The protein localises to the cell inner membrane. It localises to the cytoplasm. The enzyme catalyses ATP + H2O + cellular proteinSide 1 = ADP + phosphate + cellular proteinSide 2.. Part of the Sec protein translocase complex. Interacts with the SecYEG preprotein conducting channel. Has a central role in coupling the hydrolysis of ATP to the transfer of proteins into and across the cell membrane, serving both as a receptor for the preprotein-SecB complex and as an ATP-driven molecular motor driving the stepwise translocation of polypeptide chains across the membrane. This Erwinia tasmaniensis (strain DSM 17950 / CFBP 7177 / CIP 109463 / NCPPB 4357 / Et1/99) protein is Protein translocase subunit SecA.